A 79-amino-acid chain; its full sequence is Cytochrome b (79 aa).

Transmembrane regions (helical) follow at residues 1–7 (TALLLAA), 31–52 (WLIR…YLHI), and 67–79 (WNIG…TLMA). The heme b site is built by histidine 37 and histidine 51.

It belongs to the cytochrome b family. As to quaternary structure, the cytochrome bc1 complex contains 11 subunits: 3 respiratory subunits (MT-CYB, CYC1 and UQCRFS1), 2 core proteins (UQCRC1 and UQCRC2) and 6 low-molecular weight proteins (UQCRH/QCR6, UQCRB/QCR7, UQCRQ/QCR8, UQCR10/QCR9, UQCR11/QCR10 and a cleavage product of UQCRFS1). This cytochrome bc1 complex then forms a dimer. Requires heme b as cofactor.

Its subcellular location is the mitochondrion inner membrane. In terms of biological role, component of the ubiquinol-cytochrome c reductase complex (complex III or cytochrome b-c1 complex) that is part of the mitochondrial respiratory chain. The b-c1 complex mediates electron transfer from ubiquinol to cytochrome c. Contributes to the generation of a proton gradient across the mitochondrial membrane that is then used for ATP synthesis. In Pomatostomus superciliosus (White-browed babbler), this protein is Cytochrome b (MT-CYB).